We begin with the raw amino-acid sequence, 349 residues long: Isopentenyl-diphosphate delta-isomerase (349 aa).

Residue 6-7 (RK) coordinates substrate. FMN is bound by residues 62 to 64 (AMT), Ser-93, and Asn-122. Gln-152 contacts substrate. Residue Glu-153 participates in Mg(2+) binding. Residues Lys-184, Thr-214, 258-259 (GG), and 280-281 (AG) contribute to the FMN site.

This sequence belongs to the IPP isomerase type 2 family. As to quaternary structure, homooctamer. Dimer of tetramers. It depends on FMN as a cofactor. Requires NADPH as cofactor. Mg(2+) serves as cofactor.

Its subcellular location is the cytoplasm. It catalyses the reaction isopentenyl diphosphate = dimethylallyl diphosphate. In terms of biological role, involved in the biosynthesis of isoprenoids. Catalyzes the 1,3-allylic rearrangement of the homoallylic substrate isopentenyl (IPP) to its allylic isomer, dimethylallyl diphosphate (DMAPP). The sequence is that of Isopentenyl-diphosphate delta-isomerase from Bacillus mycoides (strain KBAB4) (Bacillus weihenstephanensis).